We begin with the raw amino-acid sequence, 583 residues long: J protein JJJ2 (583 aa).

One can recognise a J domain in the interval arginine 11–isoleucine 79. Polar residues predominate over residues serine 215–leucine 224. The segment at serine 215–serine 313 is disordered. Phosphoserine is present on serine 229. Residues glutamine 240–glutamine 252 show a composition bias toward low complexity. Residues serine 262–proline 281 are compositionally biased toward basic and acidic residues. A compositionally biased stretch (polar residues) spans lysine 298–serine 313.

The protein localises to the cytoplasm. It localises to the nucleus. The polypeptide is J protein JJJ2 (JJJ2) (Saccharomyces cerevisiae (strain ATCC 204508 / S288c) (Baker's yeast)).